We begin with the raw amino-acid sequence, 88 residues long: Large ribosomal subunit protein eL34 (88 aa).

This sequence belongs to the eukaryotic ribosomal protein eL34 family.

This chain is Large ribosomal subunit protein eL34, found in Saccharolobus solfataricus (strain ATCC 35092 / DSM 1617 / JCM 11322 / P2) (Sulfolobus solfataricus).